Reading from the N-terminus, the 598-residue chain is Elongation factor 4 (598 aa).

In terms of domain architecture, tr-type G spans 4-185 (KNIRNFSIIA…TIITKIPAPK (182 aa)). GTP is bound by residues 16-21 (DHGKST) and 132-135 (NKID).

This sequence belongs to the TRAFAC class translation factor GTPase superfamily. Classic translation factor GTPase family. LepA subfamily.

Its subcellular location is the cell inner membrane. The enzyme catalyses GTP + H2O = GDP + phosphate + H(+). In terms of biological role, required for accurate and efficient protein synthesis under certain stress conditions. May act as a fidelity factor of the translation reaction, by catalyzing a one-codon backward translocation of tRNAs on improperly translocated ribosomes. Back-translocation proceeds from a post-translocation (POST) complex to a pre-translocation (PRE) complex, thus giving elongation factor G a second chance to translocate the tRNAs correctly. Binds to ribosomes in a GTP-dependent manner. The chain is Elongation factor 4 from Campylobacter jejuni subsp. jejuni serotype O:2 (strain ATCC 700819 / NCTC 11168).